The following is a 331-amino-acid chain: Lipoyl synthase (331 aa).

Over residues Met1 to Val14 the composition is skewed to polar residues. A disordered region spans residues Met1–Thr32. The [4Fe-4S] cluster site is built by Cys78, Cys83, Cys89, Cys104, Cys108, Cys111, and Ser318. The region spanning Cys89–Ser307 is the Radical SAM core domain.

This sequence belongs to the radical SAM superfamily. Lipoyl synthase family. [4Fe-4S] cluster serves as cofactor.

The protein resides in the cytoplasm. It carries out the reaction [[Fe-S] cluster scaffold protein carrying a second [4Fe-4S](2+) cluster] + N(6)-octanoyl-L-lysyl-[protein] + 2 oxidized [2Fe-2S]-[ferredoxin] + 2 S-adenosyl-L-methionine + 4 H(+) = [[Fe-S] cluster scaffold protein] + N(6)-[(R)-dihydrolipoyl]-L-lysyl-[protein] + 4 Fe(3+) + 2 hydrogen sulfide + 2 5'-deoxyadenosine + 2 L-methionine + 2 reduced [2Fe-2S]-[ferredoxin]. Its pathway is protein modification; protein lipoylation via endogenous pathway; protein N(6)-(lipoyl)lysine from octanoyl-[acyl-carrier-protein]: step 2/2. Its function is as follows. Catalyzes the radical-mediated insertion of two sulfur atoms into the C-6 and C-8 positions of the octanoyl moiety bound to the lipoyl domains of lipoate-dependent enzymes, thereby converting the octanoylated domains into lipoylated derivatives. The sequence is that of Lipoyl synthase from Bordetella avium (strain 197N).